We begin with the raw amino-acid sequence, 361 residues long: G2/mitotic-specific cyclin-B (361 aa).

It belongs to the cyclin family. Cyclin AB subfamily.

In terms of biological role, essential for the control of the cell cycle at the G2/M (mitosis) transition. Interacts with the CDC2 protein kinase to form MPF. G2/M cyclins accumulate steadily during G2 and are abruptly destroyed at mitosis. This chain is G2/mitotic-specific cyclin-B, found in Hydra vulgaris (Hydra).